Reading from the N-terminus, the 166-residue chain is Regulatory protein RecX (166 aa).

It belongs to the RecX family.

The protein localises to the cytoplasm. Modulates RecA activity. The protein is Regulatory protein RecX of Shigella boydii serotype 18 (strain CDC 3083-94 / BS512).